The primary structure comprises 477 residues: MDGFYDQQVPYMVTNSQRGRNCNEKPTNVRKRKFINRDLAHDSEELFQDLSQLQETWLAEAQVPDNDEQFVPDYQAESLAFHGLPLKIKKEPHSPCSEISSACSQEQPFKFSYGEKCLYNVSAYDQKPQVGMRPSNPPTPSSTPVSPLHHASPNSTHTPKPDRAFPAHLPPSQSIPDSSYPMDHRFRRQLSEPCNSFPPLPTMPREGRPMYQRQMSEPNIPFPPQGFKQEYHDPVYEHNTMVGSAASQSFPPPLMIKQEPRDFAYDSEVPSCHSIYMRQEGFLAHPSRTEGCMFEKGPRQFYDDTCVVPEKFDGDIKQEPGMYREGPTYQRRGSLQLWQFLVALLDDPSNSHFIAWTGRGMEFKLIEPEEVARRWGIQKNRPAMNYDKLSRSLRYYYEKGIMQKVAGERYVYKFVCDPEALFSMAFPDNQRPLLKTDMERHINEEDTVPLSHFDESMAYMPEGGCCNPHPYNEGYVY.

A Phosphoserine modification is found at Ser94. Residues 128 to 179 (PQVGMRPSNPPTPSSTPVSPLHHASPNSTHTPKPDRAFPAHLPPSQSIPDSS) are disordered. Ser191 and Ser216 each carry phosphoserine; by RPS6KA1 and RPS6KA5. A Glycyl lysine isopeptide (Lys-Gly) (interchain with G-Cter in SUMO2) cross-link involves residue Lys317. Positions 335-415 (LQLWQFLVAL…AGERYVYKFV (81 aa)) form a DNA-binding region, ETS.

This sequence belongs to the ETS family. Sumoylated. Post-translationally, phosphorylated at Ser-191 and Ser-216 by RPS6KA1 and RPS6KA5; phosphorylation activates transcriptional activity. In terms of tissue distribution, very highly expressed in brain, highly expressed in testis, lung and heart, moderately in spleen, small intestine, pancreas and colon, weakly in liver, prostate and thymus, very weakly in skeletal muscle, kidney and ovary and not in placenta and peripheral blood leukocytes.

It is found in the nucleus. Its function is as follows. Transcriptional activator that binds to DNA sequences containing the consensus pentanucleotide 5'-CGGA[AT]-3'. Required for olfactory dopaminergic neuron differentiation; may directly activate expression of tyrosine hydroxylase (TH). This Homo sapiens (Human) protein is ETS translocation variant 1.